The following is a 91-amino-acid chain: Lipolysis-activating peptide 1-alpha chain (91 aa).

A signal peptide spans 1–22 (MMKLVLFGIIVILFSLIGSIHG). The LCN-type CS-alpha/beta domain maps to 24–87 (SGNYPLNPYG…VWNAVKKHCK (64 aa)). 3 disulfides stabilise this stretch: Cys-38–Cys-61, Cys-47–Cys-66, and Cys-51–Cys-68.

This sequence belongs to the long (3 C-C) scorpion toxin superfamily. Monomer (edited version) and heterodimer (non-edited version) of this alpha chain and a beta chain (AC P84809). Expressed by the venom gland.

The protein resides in the secreted. In terms of biological role, the heterodimer non-edited LVP1 induces lipolysis in rat adipocytes. Induction of lipolysis by LVP1 appears to be mediated through the beta-2 adrenergic receptor pathway (ADRB2). Intracerebroventricular injection is not toxic to mice. The edited BmKBTx-like, similar to beta-toxins, may modulate voltage-gated sodium channels (Nav) and may block voltage-gated potassium channels (Kv). The chain is Lipolysis-activating peptide 1-alpha chain from Buthus occitanus tunetanus (Common European scorpion).